We begin with the raw amino-acid sequence, 199 residues long: Chaperone protein TorD (199 aa).

The protein belongs to the TorD/DmsD family. TorD subfamily.

It localises to the cytoplasm. In terms of biological role, involved in the biogenesis of TorA. Acts on TorA before the insertion of the molybdenum cofactor and, as a result, probably favors a conformation of the apoenzyme that is competent for acquiring the cofactor. The protein is Chaperone protein TorD of Escherichia coli O45:K1 (strain S88 / ExPEC).